Reading from the N-terminus, the 174-residue chain is Crossover junction endodeoxyribonuclease RuvC (174 aa).

Catalysis depends on residues Asp-8, Glu-69, and Asp-141. The Mg(2+) site is built by Asp-8, Glu-69, and Asp-141.

Belongs to the RuvC family. Homodimer which binds Holliday junction (HJ) DNA. The HJ becomes 2-fold symmetrical on binding to RuvC with unstacked arms; it has a different conformation from HJ DNA in complex with RuvA. In the full resolvosome a probable DNA-RuvA(4)-RuvB(12)-RuvC(2) complex forms which resolves the HJ. Requires Mg(2+) as cofactor.

The protein localises to the cytoplasm. It catalyses the reaction Endonucleolytic cleavage at a junction such as a reciprocal single-stranded crossover between two homologous DNA duplexes (Holliday junction).. The RuvA-RuvB-RuvC complex processes Holliday junction (HJ) DNA during genetic recombination and DNA repair. Endonuclease that resolves HJ intermediates. Cleaves cruciform DNA by making single-stranded nicks across the HJ at symmetrical positions within the homologous arms, yielding a 5'-phosphate and a 3'-hydroxyl group; requires a central core of homology in the junction. The consensus cleavage sequence is 5'-(A/T)TT(C/G)-3'. Cleavage occurs on the 3'-side of the TT dinucleotide at the point of strand exchange. HJ branch migration catalyzed by RuvA-RuvB allows RuvC to scan DNA until it finds its consensus sequence, where it cleaves and resolves the cruciform DNA. The sequence is that of Crossover junction endodeoxyribonuclease RuvC from Xanthomonas euvesicatoria pv. vesicatoria (strain 85-10) (Xanthomonas campestris pv. vesicatoria).